We begin with the raw amino-acid sequence, 284 residues long: Homoserine O-acetyltransferase 2 (284 aa).

The Acyl-thioester intermediate role is filled by C133. The substrate site is built by K154 and S178. Catalysis depends on H220, which acts as the Proton acceptor. E222 is a catalytic residue. R234 is a substrate binding site.

This sequence belongs to the MetA family.

The protein resides in the cytoplasm. It catalyses the reaction L-homoserine + acetyl-CoA = O-acetyl-L-homoserine + CoA. It functions in the pathway amino-acid biosynthesis; L-methionine biosynthesis via de novo pathway; O-acetyl-L-homoserine from L-homoserine: step 1/1. Functionally, transfers an acetyl group from acetyl-CoA to L-homoserine, forming acetyl-L-homoserine. The protein is Homoserine O-acetyltransferase 2 of Ilyobacter polytropus (strain ATCC 51220 / DSM 2926 / LMG 16218 / CuHBu1).